A 636-amino-acid polypeptide reads, in one-letter code: uncharacterized protein (636 aa).

Disordered stretches follow at residues 1–22 (MYNVRGDLNRKTPSDGNVNEIG) and 81–107 (SSQTYNRYPNGGNSAGSDMYSTSPQNN). At 1 to 170 (MYNVRGDLNR…YFVGGEGLMQ (170 aa)) the chain is on the cytoplasmic side. A helical; Signal-anchor for type II membrane protein transmembrane segment spans residues 171 to 191 (LLFLLFLAAGTGMLFIGLPIL). The Lumenal portion of the chain corresponds to 192–636 (TYTGHNSLAS…RPKNSLMDGC (445 aa)). One can recognise a GH16 domain in the interval 218 to 587 (LRYGSLIDPD…YVRIYQDSSD (370 aa)). 6 N-linked (GlcNAc...) asparagine glycosylation sites follow: asparagine 291, asparagine 378, asparagine 429, asparagine 464, asparagine 489, and asparagine 616.

Belongs to the SKN1/KRE6 family.

It is found in the endoplasmic reticulum membrane. Its function is as follows. Required for synthesis of the major beta-glucans of the yeast cell wall. This is an uncharacterized protein from Schizosaccharomyces pombe (strain 972 / ATCC 24843) (Fission yeast).